Reading from the N-terminus, the 2389-residue chain is Highly reducing polyketide synthase Dhc3 (2389 aa).

The Ketosynthase family 3 (KS3) domain occupies 9-433 (DVPIAVVGLA…GTNGHAVLES (425 aa)). Catalysis depends on for beta-ketoacyl synthase activity residues C181, H316, and H356. The malonyl-CoA:ACP transacylase (MAT) domain stretch occupies residues 551–861 (FVFTGQGAQW…LSGPVEQILN (311 aa)). S641 acts as the For malonyltransferase activity in catalysis. Positions 944–1079 (RSLIGAQVPM…GLITIDYADT (136 aa)) are N-terminal hotdog fold. The 320-residue stretch at 944 to 1263 (RSLIGAQVPM…VSELENDTEA (320 aa)) folds into the PKS/mFAS DH domain. The interval 946–1262 (LIGAQVPMMD…RVSELENDTE (317 aa)) is dehydratase (DH) domain. Catalysis depends on H976, which acts as the Proton acceptor; for dehydratase activity. The interval 1107–1263 (PDICSKEDFY…VSELENDTEA (157 aa)) is C-terminal hotdog fold. The active-site Proton donor; for dehydratase activity is D1173. An enoylreductase (ER) domain region spans residues 1673 to 1987 (GLLDTLAFIE…QGKHRGKLVL (315 aa)). Positions 2011–2191 (ATYLFVGGLG…VAVDLGIMRD (181 aa)) are catalytic ketoreductase (KRc) domain. One can recognise a Carrier domain in the interval 2302–2379 (EAVSIITDAL…EFAEKIAEKS (78 aa)). O-(pantetheine 4'-phosphoryl)serine is present on S2339.

Its pathway is mycotoxin biosynthesis. Its function is as follows. Highly reducing polyketide synthase; part of the gene cluster that mediates the biosynthesis of 10,11-dehydrocurvularin, a prevalent fungal phytotoxin with heat shock response and immune-modulatory activities. The highly reducing polyketide synthase Dhc3 is responsible for biosynthesis up to the tetraketide stage. The non-reducing polyketide synthase Dhc5 then conducts four additional chain extension cycles, producing the unreduced part of the nascent octaketide from C-1 to C-8 in 10,11-dehydrocurvularin. The chain is Highly reducing polyketide synthase Dhc3 (Dhc3) from Alternaria cinerariae.